A 92-amino-acid chain; its full sequence is Small ribosomal subunit protein uS19 (92 aa).

This sequence belongs to the universal ribosomal protein uS19 family.

Functionally, protein S19 forms a complex with S13 that binds strongly to the 16S ribosomal RNA. The sequence is that of Small ribosomal subunit protein uS19 from Staphylococcus aureus (strain Mu3 / ATCC 700698).